A 161-amino-acid polypeptide reads, in one-letter code: Nucleotide-binding protein PBPRA2024 (161 aa).

The protein belongs to the YajQ family.

Nucleotide-binding protein. This chain is Nucleotide-binding protein PBPRA2024, found in Photobacterium profundum (strain SS9).